The primary structure comprises 237 residues: MQLTEQQHDKLSKVQLDESWKHSLAEFLVSSRMDELRQFLIEQKNQDKVIYPPSKQIFNALNTTPLSAVKVVILGQDPYHGPNQANGLSFSVQKGIVLPPSLRNIFHELNTDLGIPVPKHGDLTKWADQGVLLLNSVLTVEAGQPTSHQKRGWEQFTDSIIDVLNEQREHVVFILWGAYAQRKGQRIDREKHLVLKAAHPSPLAANRGGFFGCKVFSKTNNYLKQHGIEPIDWQLDA.

The Proton acceptor role is filled by D77.

The protein belongs to the uracil-DNA glycosylase (UDG) superfamily. UNG family.

Its subcellular location is the cytoplasm. It catalyses the reaction Hydrolyzes single-stranded DNA or mismatched double-stranded DNA and polynucleotides, releasing free uracil.. In terms of biological role, excises uracil residues from the DNA which can arise as a result of misincorporation of dUMP residues by DNA polymerase or due to deamination of cytosine. The chain is Uracil-DNA glycosylase from Acinetobacter baylyi (strain ATCC 33305 / BD413 / ADP1).